A 1104-amino-acid chain; its full sequence is tRNA ligase 1 (1104 aa).

The active-site N6-AMP-lysine intermediate is Lys-152.

This sequence belongs to the TRL1 family. Mg(2+) serves as cofactor. Mainly expressed in proliferating cells and tissues such as root meristems, the vasculature of developing plantlets, flowers and elongating tissue.

The protein resides in the nucleus. It localises to the cytoplasm. The catalysed reaction is ATP + (ribonucleotide)n-3'-hydroxyl + 5'-phospho-(ribonucleotide)m = (ribonucleotide)n+m + AMP + diphosphate.. Requires the presence of NTP, preferentially ATP rather than dATP, UTP, CTP and GTP, respectively, to mediate ribonucleotide 5'-phosphorylation. Essential component of stress-response pathways entailing repair of RNA breaks with 2',3'-cyclic phosphate and 5'-OH ends. Tri-functional enzyme that repairs RNA breaks with 2',3'-cyclic-PO(4) and 5'-OH ends. The ligation activity requires three sequential enzymatic activities: opening of the 2'3'-cyclic phosphodiester bond of the 5' half-tRNA leaving a 2'-phosphomonoester (CPDase activity), phosphorylation of the 5' terminus of the 3' half-tRNA in the presence of ATP (kinase activity) and ligation of the two tRNA halves in an ATP-dependent reaction (ligase activity). Deficient in transferring AMP to pRNA(OH) to form AppRNA(OH) but proficient at sealing pre-adenylylated AppRNA(OH). CPDase and kinase reactions are almost insensitive to RNA length, whereas the ligase activity decreases with shorter RNA size. Can also splice DNA ended by a single 3'-terminal ribonucleoside 2',3'-cyclic-PO(4). Binds to mRNA, mature and immature. Exhibits tRNA ligase activity in vitro. Required for the splicing of precursor tRNA molecules containing introns. Can circularize an intron cleaved from a pre-tRNA by splicing endonuclease in vitro. Seems not involved in unfolded protein response (UPR) in the endoplasmic reticulum. Involved in auxin signaling and polar transport during organ morphogenesis. This is tRNA ligase 1 from Arabidopsis thaliana (Mouse-ear cress).